The following is a 131-amino-acid chain: Small ribosomal subunit protein bS6 (131 aa).

The tract at residues 97–131 (TEASPMVKAKDERRRDVAEDLDEEEVDDVAEDSEE) is disordered. Over residues 104-114 (KAKDERRRDVA) the composition is skewed to basic and acidic residues. Over residues 115–131 (EDLDEEEVDDVAEDSEE) the composition is skewed to acidic residues.

It belongs to the bacterial ribosomal protein bS6 family.

Its function is as follows. Binds together with bS18 to 16S ribosomal RNA. The sequence is that of Small ribosomal subunit protein bS6 from Proteus mirabilis (strain HI4320).